A 254-amino-acid chain; its full sequence is MSKAPPLRLGVNIDHIATLRNARGGRHPDPLRAAFAAIEAGADGITAHLREDRRHIRDADMQRLKAEISKPLNFEMAATDDMIRIALGVKPHAVCLVPERREELTTEGGLDVVGQQASLGPAIARFNDAGIRTSLFIAADPAQIEMAAKLKAPAIEIHTGAWCDAITDGDAAKANTEWQRIFAGAALARSAGLEVHAGHGLDYATAETISELPQIVELNIGFYMIGEALFVGLGETVRAMRAAMDRGRAKAIAA.

Asparagine 12 is a 3-amino-2-oxopropyl phosphate binding site. 14-15 (DH) is a binding site for 1-deoxy-D-xylulose 5-phosphate. A 3-amino-2-oxopropyl phosphate-binding site is contributed by arginine 23. Histidine 48 acts as the Proton acceptor in catalysis. Residues arginine 50 and histidine 55 each contribute to the 1-deoxy-D-xylulose 5-phosphate site. Glutamate 75 (proton acceptor) is an active-site residue. Threonine 105 is a binding site for 1-deoxy-D-xylulose 5-phosphate. The active-site Proton donor is histidine 199. 3-amino-2-oxopropyl phosphate contacts are provided by residues glycine 200 and 221 to 222 (GF).

It belongs to the PNP synthase family. In terms of assembly, homooctamer; tetramer of dimers.

It is found in the cytoplasm. It catalyses the reaction 3-amino-2-oxopropyl phosphate + 1-deoxy-D-xylulose 5-phosphate = pyridoxine 5'-phosphate + phosphate + 2 H2O + H(+). Its pathway is cofactor biosynthesis; pyridoxine 5'-phosphate biosynthesis; pyridoxine 5'-phosphate from D-erythrose 4-phosphate: step 5/5. Catalyzes the complicated ring closure reaction between the two acyclic compounds 1-deoxy-D-xylulose-5-phosphate (DXP) and 3-amino-2-oxopropyl phosphate (1-amino-acetone-3-phosphate or AAP) to form pyridoxine 5'-phosphate (PNP) and inorganic phosphate. The protein is Pyridoxine 5'-phosphate synthase of Rhodopseudomonas palustris (strain ATCC BAA-98 / CGA009).